The chain runs to 179 residues: MTFDLDIKNTVRTIPDYPKPGILFRDITTLLADARAFRRAVDELVHPWAGSKIDKVAGIEARGFILGGAVAHQLSAGFVPIRKKGKLPHKTVSMSYALEYGTDEMEMHVDAVQPGERVILVDDLIATGGTAEGAVKLLRQIGATVVAACFIIDLPDLGGAAKLRALDVPVRALIAFEGH.

The protein belongs to the purine/pyrimidine phosphoribosyltransferase family. Homodimer.

Its subcellular location is the cytoplasm. It catalyses the reaction AMP + diphosphate = 5-phospho-alpha-D-ribose 1-diphosphate + adenine. Its pathway is purine metabolism; AMP biosynthesis via salvage pathway; AMP from adenine: step 1/1. In terms of biological role, catalyzes a salvage reaction resulting in the formation of AMP, that is energically less costly than de novo synthesis. The chain is Adenine phosphoribosyltransferase from Bradyrhizobium sp. (strain BTAi1 / ATCC BAA-1182).